We begin with the raw amino-acid sequence, 293 residues long: Homoserine kinase (293 aa).

Residue 83 to 93 (PITRGMGSSSA) coordinates ATP.

Belongs to the GHMP kinase family. Homoserine kinase subfamily.

The protein localises to the cytoplasm. The catalysed reaction is L-homoserine + ATP = O-phospho-L-homoserine + ADP + H(+). It participates in amino-acid biosynthesis; L-threonine biosynthesis; L-threonine from L-aspartate: step 4/5. Catalyzes the ATP-dependent phosphorylation of L-homoserine to L-homoserine phosphate. The polypeptide is Homoserine kinase (Helicobacter pylori (strain ATCC 700392 / 26695) (Campylobacter pylori)).